Consider the following 603-residue polypeptide: NADPH-dependent diflavin oxidoreductase 1 (603 aa).

The Flavodoxin-like domain maps to 10–155 (VTILYGSETG…YYSEWETNLL (146 aa)). FMN is bound by residues 16 to 21 (SETGNA), 64 to 67 (STTG), 102 to 111 (IGDSSYPKFN), and Glu-137. Residues 209-451 (TNLLLGSVKA…HKSNLKFELP (243 aa)) form the FAD-binding FR-type domain. FAD is bound by residues Arg-359, 390–393 (RLFS), and 422–425 (GLCT). Residues Thr-465 and 521–522 (SR) contribute to the NADP(+) site. Position 603 (Trp-603) interacts with FAD.

Belongs to the NADPH-dependent diflavin oxidoreductase NDOR1 family. This sequence in the N-terminal section; belongs to the flavodoxin family. It in the C-terminal section; belongs to the flavoprotein pyridine nucleotide cytochrome reductase family. As to quaternary structure, interacts with DRE2; as part of the cytosolic iron-sulfur (Fe-S) protein assembly (CIA) machinery. FAD is required as a cofactor. It depends on FMN as a cofactor.

The protein localises to the cytoplasm. The protein resides in the mitochondrion. The enzyme catalyses 2 oxidized [2Fe-2S]-[protein] + NADPH = 2 reduced [2Fe-2S]-[protein] + NADP(+) + H(+). In terms of biological role, NADPH-dependent reductase which is a central component of the cytosolic iron-sulfur (Fe-S) protein assembly (CIA) machinery. Transfers electrons from NADPH via its FAD and FMN prosthetic groups to the [2Fe-2S] cluster of DRE2, another key component of the CIA machinery. In turn, this reduced cluster provides electrons for assembly of cytosolic iron-sulfur cluster proteins. Positively controls H(2)O(2)-induced cell death. This chain is NADPH-dependent diflavin oxidoreductase 1, found in Debaryomyces hansenii (strain ATCC 36239 / CBS 767 / BCRC 21394 / JCM 1990 / NBRC 0083 / IGC 2968) (Yeast).